Consider the following 99-residue polypeptide: Sec-independent protein translocase protein TatA (99 aa).

Residues 1–21 traverse the membrane as a helical segment; it reads MIGNLKPLEIVLIIAVILLLF. The tract at residues 46–99 is disordered; the sequence is AMKKDDAATAAPTTETVADDTVPPQSTTARTIQAAPGDVTSSRPVSEAKPTTQS. Low complexity predominate over residues 53 to 69; that stretch reads ATAAPTTETVADDTVPP. Residues 84-99 show a composition bias toward polar residues; sequence VTSSRPVSEAKPTTQS.

It belongs to the TatA/E family. The Tat system comprises two distinct complexes: a TatABC complex, containing multiple copies of TatA, TatB and TatC subunits, and a separate TatA complex, containing only TatA subunits. Substrates initially bind to the TatABC complex, which probably triggers association of the separate TatA complex to form the active translocon.

It localises to the cell membrane. In terms of biological role, part of the twin-arginine translocation (Tat) system that transports large folded proteins containing a characteristic twin-arginine motif in their signal peptide across membranes. TatA could form the protein-conducting channel of the Tat system. The protein is Sec-independent protein translocase protein TatA of Streptomyces griseus subsp. griseus (strain JCM 4626 / CBS 651.72 / NBRC 13350 / KCC S-0626 / ISP 5235).